Here is a 101-residue protein sequence, read N- to C-terminus: MFDQTTNTEVHQLTVGKIETANGTIKPQLLRDAVKRAVTNFFSQLDGQEASEVYEMVLSEVEAPLLDIIMQHTRGNQTRAANMLGINRGTLRKKLKKYGMN.

The segment at residues 77–96 (QTRAANMLGINRGTLRKKLK) is a DNA-binding region (H-T-H motif).

The protein belongs to the transcriptional regulatory Fis family. In terms of assembly, homodimer.

Its function is as follows. Activates ribosomal RNA transcription. Plays a direct role in upstream activation of rRNA promoters. The sequence is that of DNA-binding protein Fis from Shewanella denitrificans (strain OS217 / ATCC BAA-1090 / DSM 15013).